We begin with the raw amino-acid sequence, 229 residues long: Probable transmembrane reductase CYB561D1 (229 aa).

Topologically, residues 1 to 24 are cytoplasmic; sequence MHSMEVGLVPAPAREPRLTRWLRR. A Cytochrome b561 domain is found at 22–224; it reads LRRGSGILAH…HQISSSYLPR (203 aa). The chain crosses the membrane as a helical span at residues 25-45; that stretch reads GSGILAHLIALGFTIFLTVLS. The Lumenal portion of the chain corresponds to 46 to 53; sequence RPGTSLFS. A helical membrane pass occupies residues 54 to 74; the sequence is WHPVFMALAFCLCMAEAILLF. His55 is a binding site for heme b. Over 75-91 the chain is Cytoplasmic; the sequence is SPEHSLFFFCSRKTRIR. Residues 92 to 112 traverse the membrane as a helical segment; the sequence is LHWAGQTMAILCAVLGLGFII. Residues His93 and His127 each contribute to the heme b site. Residues 113–128 are Lumenal-facing; sequence SSKIRSEMSHLVSWHS. The helical transmembrane segment at 129–149 threads the bilayer; sequence WIGALTLLATGGQALCGLCLL. Topologically, residues 150–169 are cytoplasmic; sequence CPRAARVSRVARLKLYHLTC. His166 is a binding site for heme b. The chain crosses the membrane as a helical span at residues 170–190; that stretch reads GLVVYLMATVTVLLGMYSVWF. Over 191-193 the chain is Lumenal; sequence QAQ. A helical membrane pass occupies residues 194 to 214; sequence IKGTAWYLCLGLPLYPALVIM. Residues 215–229 are Cytoplasmic-facing; the sequence is HQISSSYLPRKKVEI.

Requires heme b as cofactor.

It localises to the membrane. The catalysed reaction is monodehydro-L-ascorbate radical(out) + L-ascorbate(in) = monodehydro-L-ascorbate radical(in) + L-ascorbate(out). It catalyses the reaction Fe(3+)(out) + L-ascorbate(in) = monodehydro-L-ascorbate radical(in) + Fe(2+)(out) + H(+). Probable transmembrane reductase that may use ascorbate as an electron donor and transfer electrons across membranes to reduce monodehydro-L-ascorbate radical and iron cations Fe(3+) in another cellular compartment. The polypeptide is Probable transmembrane reductase CYB561D1 (Mus musculus (Mouse)).